Consider the following 892-residue polypeptide: DNA mismatch repair protein MutS (892 aa).

607-614 is a binding site for ATP; the sequence is GPNMSGKS. Positions 833 to 854 are disordered; it reads EESQLSFFGGEQSPKKQDKPVL. A compositionally biased stretch (basic and acidic residues) spans 845-854; that stretch reads SPKKQDKPVL.

The protein belongs to the DNA mismatch repair MutS family.

Its function is as follows. This protein is involved in the repair of mismatches in DNA. It is possible that it carries out the mismatch recognition step. This protein has a weak ATPase activity. In Bacillus cereus (strain Q1), this protein is DNA mismatch repair protein MutS.